A 353-amino-acid chain; its full sequence is 3-isopropylmalate dehydrogenase (353 aa).

76–89 (GPKWDDPRAKVRPE) provides a ligand contact to NAD(+). Substrate is bound by residues R96, R106, R134, and D223. Mg(2+) contacts are provided by D223, D247, and D251. 281-293 (GSAPDIAGKGIAN) is an NAD(+) binding site.

This sequence belongs to the isocitrate and isopropylmalate dehydrogenases family. LeuB type 1 subfamily. As to quaternary structure, homodimer. Mg(2+) serves as cofactor. The cofactor is Mn(2+).

The protein resides in the cytoplasm. It catalyses the reaction (2R,3S)-3-isopropylmalate + NAD(+) = 4-methyl-2-oxopentanoate + CO2 + NADH. It functions in the pathway amino-acid biosynthesis; L-leucine biosynthesis; L-leucine from 3-methyl-2-oxobutanoate: step 3/4. In terms of biological role, catalyzes the oxidation of 3-carboxy-2-hydroxy-4-methylpentanoate (3-isopropylmalate) to 3-carboxy-4-methyl-2-oxopentanoate. The product decarboxylates to 4-methyl-2 oxopentanoate. The protein is 3-isopropylmalate dehydrogenase of Anaeromyxobacter dehalogenans (strain 2CP-C).